Consider the following 443-residue polypeptide: Ribosomal protein uS12 methylthiotransferase RimO (443 aa).

The region spanning 10 to 120 (PRVGFVSLGC…VVKAVHQHLP (111 aa)) is the MTTase N-terminal domain. Residues Cys19, Cys55, Cys84, Cys151, Cys155, and Cys158 each contribute to the [4Fe-4S] cluster site. In terms of domain architecture, Radical SAM core spans 137–375 (LTPAHYAYLK…DFQEDISTQR (239 aa)). The TRAM domain occupies 377 to 443 (ERWIGRDITV…VHDLYARPLP (67 aa)).

The protein belongs to the methylthiotransferase family. RimO subfamily. The cofactor is [4Fe-4S] cluster.

The protein resides in the cytoplasm. The catalysed reaction is L-aspartate(89)-[ribosomal protein uS12]-hydrogen + (sulfur carrier)-SH + AH2 + 2 S-adenosyl-L-methionine = 3-methylsulfanyl-L-aspartate(89)-[ribosomal protein uS12]-hydrogen + (sulfur carrier)-H + 5'-deoxyadenosine + L-methionine + A + S-adenosyl-L-homocysteine + 2 H(+). Functionally, catalyzes the methylthiolation of an aspartic acid residue of ribosomal protein uS12. The polypeptide is Ribosomal protein uS12 methylthiotransferase RimO (Aromatoleum aromaticum (strain DSM 19018 / LMG 30748 / EbN1) (Azoarcus sp. (strain EbN1))).